Reading from the N-terminus, the 250-residue chain is Small ribosomal subunit protein uS2 (250 aa).

The protein belongs to the universal ribosomal protein uS2 family.

In Variovorax paradoxus (strain S110), this protein is Small ribosomal subunit protein uS2.